The following is a 154-amino-acid chain: Transcriptional repressor NrdR (154 aa).

Residues 3-34 (CPFCGANDTKVIDSRLVAEGEQVRRRRECLAC) fold into a zinc finger. Positions 49–139 (PRLIKTDGSR…VYRRFQDLNE (91 aa)) constitute an ATP-cone domain.

This sequence belongs to the NrdR family. It depends on Zn(2+) as a cofactor.

Functionally, negatively regulates transcription of bacterial ribonucleotide reductase nrd genes and operons by binding to NrdR-boxes. The chain is Transcriptional repressor NrdR from Pseudomonas fluorescens (strain ATCC BAA-477 / NRRL B-23932 / Pf-5).